The following is a 178-amino-acid chain: NADH-quinone oxidoreductase subunit I 2 (178 aa).

4Fe-4S ferredoxin-type domains are found at residues 46–78 (IVLTRDPDGGERCVACYLCSAVCPVSCISMQAA) and 88–117 (AWFRINFARCIYCGLCEEACPTSAIQLTPF). Residues cysteine 58, cysteine 61, cysteine 64, cysteine 68, cysteine 97, cysteine 100, cysteine 103, and cysteine 107 each coordinate [4Fe-4S] cluster.

It belongs to the complex I 23 kDa subunit family. NDH-1 is composed of 14 different subunits. Subunits NuoA, H, J, K, L, M, N constitute the membrane sector of the complex. It depends on [4Fe-4S] cluster as a cofactor.

The protein resides in the cell inner membrane. The catalysed reaction is a quinone + NADH + 5 H(+)(in) = a quinol + NAD(+) + 4 H(+)(out). In terms of biological role, NDH-1 shuttles electrons from NADH, via FMN and iron-sulfur (Fe-S) centers, to quinones in the respiratory chain. The immediate electron acceptor for the enzyme in this species is believed to be ubiquinone. Couples the redox reaction to proton translocation (for every two electrons transferred, four hydrogen ions are translocated across the cytoplasmic membrane), and thus conserves the redox energy in a proton gradient. The polypeptide is NADH-quinone oxidoreductase subunit I 2 (Syntrophobacter fumaroxidans (strain DSM 10017 / MPOB)).